The primary structure comprises 522 residues: Maturase K (522 aa).

The protein belongs to the intron maturase 2 family. MatK subfamily.

It is found in the plastid. It localises to the chloroplast. Functionally, usually encoded in the trnK tRNA gene intron. Probably assists in splicing its own and other chloroplast group II introns. This Sapindus saponaria (Soapberry) protein is Maturase K.